The sequence spans 508 residues: Zinc finger CCCH-type with G patch domain-containing protein (508 aa).

The interval 67–86 (QQESSHHDSGTPETDTKTSV) is disordered. A compositionally biased stretch (basic and acidic residues) spans 69-86 (ESSHHDSGTPETDTKTSV). The segment at 161 to 188 (RSMVPCPYFLEGKCKFAGAECRFSHGYL) adopts a C3H1-type zinc-finger fold. Positions 253 to 282 (IYPLGPEEVESDSESDSQSDTGDSSSSKAA) are disordered. The segment covering 259 to 269 (EEVESDSESDS) has biased composition (acidic residues). Over residues 270-279 (QSDTGDSSSS) the composition is skewed to low complexity. A G-patch domain is found at 310-356 (TKGIGSKLMAKMGYIFGKGLGKDGEGRVEPIEVVVLPQGKSLDKCAE). The disordered stretch occupies residues 404-426 (SLHDLRVSHPGAKPDIRKTRKSA).

It is found in the nucleus. In terms of biological role, transcription repressor. The protein is Zinc finger CCCH-type with G patch domain-containing protein of Nematostella vectensis (Starlet sea anemone).